The sequence spans 464 residues: Argininosuccinate lyase (464 aa).

It belongs to the lyase 1 family. Argininosuccinate lyase subfamily.

The protein resides in the cytoplasm. It carries out the reaction 2-(N(omega)-L-arginino)succinate = fumarate + L-arginine. The protein operates within amino-acid biosynthesis; L-arginine biosynthesis; L-arginine from L-ornithine and carbamoyl phosphate: step 3/3. This is Argininosuccinate lyase from Pseudomonas paraeruginosa (strain DSM 24068 / PA7) (Pseudomonas aeruginosa (strain PA7)).